Here is a 743-residue protein sequence, read N- to C-terminus: Protein will decrease acetylation (743 aa).

WD repeat units follow at residues 389-428 (ERSR…CRGK), 493-524 (LRGH…MRCW), 535-576 (YRSH…ALII), 577-618 (YAGH…LMRV), 619-660 (FADC…QLAE), and 661-702 (LKDH…PMSD).

The protein belongs to the WD repeat TAF5 family. In terms of assembly, component of the Spt-Ada-Gcn5 acetyltransferase (SAGA) complex consisting of wda/Taf5L, Saf6, Taf9, Taf10b, Taf12, Ada1, Spt3, Spt7, Spt20, Sf3b3, Sf3b5, Nipped-A/Tra1, a histone acetyltransferase (HAT) module made up of Gcn5, Ada2b (Isoform B), Ada3 and Sgf29, and a deubiquitinase (DUB) module made up of not/nonstop, Sgf11 and e(y)2 tethered to SAGA by Atxn7. Not essential for the assembly or integrity of the SAGA complex. Not a component of the Ada2a-containing ATAC complex.

It is found in the nucleus. The protein resides in the chromosome. In terms of biological role, component of the transcription regulatory complex SAGA, a multiprotein complex that activates transcription by remodeling chromatin and mediating histone acetylation and deubiquitination. The SAGA complex predominantly acetylates histone H3. Involved in acetylation of histone H3 on 'Lys-10' (H3K9ac) by the SAGA complex in the larval central nervous system. Involved in SAGA complex coactivator functions. Required for oogenesis. This is Protein will decrease acetylation from Drosophila melanogaster (Fruit fly).